The primary structure comprises 535 residues: High affinity immunoglobulin alpha and immunoglobulin mu Fc receptor (535 aa).

Residues 1–35 (MDQGAPAKPSEQKVPSLRTRWEILLLTLCLLHGSS) form the signal peptide. Residues 36-455 (MTPPHRRSHS…ALMEGESHTR (420 aa)) lie on the Extracellular side of the membrane. A mediates immunoglobulin Fc fragment-binding region spans residues 95 to 117 (GGAVTIHCHYAPSSVNRHQRKYW). In terms of domain architecture, Ig-like V-type spans 95–189 (GGAVTIHCHY…DMLFFSVNLT (95 aa)). C102 and C173 are disulfide-bonded. The N-linked (GlcNAc...) asparagine glycan is linked to N187. Disordered regions lie at residues 201-360 (AAPA…LISE) and 405-430 (EGRSIDGSLENTTEESSPPTPSQLSV). 2 stretches are compositionally biased toward low complexity: residues 208–220 (PTTASPGAASSAG) and 241–253 (TVPTTGTSKTTSS). Residues 291–328 (KSRSMSSTTQGVWLWSTRNSVTPSVTTSEGRRQGTTPE) show a composition bias toward polar residues. The span at 330-346 (DGPRDETDVRVSPEAPR) shows a compositional bias: basic and acidic residues. Residues 413 to 429 (LENTTEESSPPTPSQLS) are compositionally biased toward polar residues. A helical transmembrane segment spans residues 456 to 476 (ILTPVSTVLALLLIAALILLK). The Cytoplasmic portion of the chain corresponds to 477–535 (RSLGRQRTSQKKERVPRITLIQMTHFLPDKLPDEGKNFQQSNLLPPQASLTVLENDPRP). A disordered region spans residues 507–535 (LPDEGKNFQQSNLLPPQASLTVLENDPRP). Over residues 513–528 (NFQQSNLLPPQASLTV) the composition is skewed to polar residues.

As to quaternary structure, interacts with IGHM; this interaction facilitates the endocytosis of IgM-coated microbes and IgM-antigen immune complexes. Post-translationally, N-glycosylated. Expressed in several tissues including thymus, spleen, liver, kidney, small and large intestine, testis and placenta. Expressed by oligodendrocytes, B-cells and macrophages but not granulocytes, T-cells or NK cells (at protein level).

The protein resides in the cell membrane. In terms of biological role, functions as a receptor for the Fc fragment of IgA and IgM. Binds IgA and IgM with high affinity and mediates their endocytosis. May function in the immune response to microbes mediated by IgA and IgM. The polypeptide is High affinity immunoglobulin alpha and immunoglobulin mu Fc receptor (Fcamr) (Mus musculus (Mouse)).